Reading from the N-terminus, the 364-residue chain is Dual-specificity RNA methyltransferase RlmN (364 aa).

Residue Glu-91 is the Proton acceptor of the active site. In terms of domain architecture, Radical SAM core spans 97–333; sequence ESDRGTLCIS…VTVRKTRGDD (237 aa). A disulfide bridge links Cys-104 with Cys-338. [4Fe-4S] cluster contacts are provided by Cys-111, Cys-115, and Cys-118. S-adenosyl-L-methionine is bound by residues 164 to 165, Ser-196, 218 to 220, and Asn-295; these read GE and SLH. Residue Cys-338 is the S-methylcysteine intermediate of the active site.

The protein belongs to the radical SAM superfamily. RlmN family. [4Fe-4S] cluster serves as cofactor.

The protein localises to the cytoplasm. It catalyses the reaction adenosine(2503) in 23S rRNA + 2 reduced [2Fe-2S]-[ferredoxin] + 2 S-adenosyl-L-methionine = 2-methyladenosine(2503) in 23S rRNA + 5'-deoxyadenosine + L-methionine + 2 oxidized [2Fe-2S]-[ferredoxin] + S-adenosyl-L-homocysteine. It carries out the reaction adenosine(37) in tRNA + 2 reduced [2Fe-2S]-[ferredoxin] + 2 S-adenosyl-L-methionine = 2-methyladenosine(37) in tRNA + 5'-deoxyadenosine + L-methionine + 2 oxidized [2Fe-2S]-[ferredoxin] + S-adenosyl-L-homocysteine. Its function is as follows. Specifically methylates position 2 of adenine 2503 in 23S rRNA and position 2 of adenine 37 in tRNAs. m2A2503 modification seems to play a crucial role in the proofreading step occurring at the peptidyl transferase center and thus would serve to optimize ribosomal fidelity. The protein is Dual-specificity RNA methyltransferase RlmN of Neisseria meningitidis serogroup C (strain 053442).